The primary structure comprises 726 residues: Probable alpha-galactosidase G (726 aa).

3 N-linked (GlcNAc...) asparagine glycosylation sites follow: asparagine 23, asparagine 166, and asparagine 456. Residue aspartate 485 is the Nucleophile of the active site. Aspartate 547 serves as the catalytic Proton donor. Asparagine 657 and asparagine 673 each carry an N-linked (GlcNAc...) asparagine glycan.

This sequence belongs to the glycosyl hydrolase 36 family. As to quaternary structure, homotetramer. Mg(2+) serves as cofactor. The cofactor is NAD(+).

It localises to the secreted. The enzyme catalyses Hydrolysis of terminal, non-reducing alpha-D-galactose residues in alpha-D-galactosides, including galactose oligosaccharides, galactomannans and galactolipids.. In terms of biological role, hydrolyzes a variety of simple alpha-D-galactoside as well as more complex molecules such as oligosaccharides and polysaccharides. Not active on paranitrophenyl-alpha-galactoside and raffinose. This is Probable alpha-galactosidase G (aglG) from Emericella nidulans (strain FGSC A4 / ATCC 38163 / CBS 112.46 / NRRL 194 / M139) (Aspergillus nidulans).